We begin with the raw amino-acid sequence, 437 residues long: Sonic hedgehog protein (437 aa).

Positions 1 to 24 (MLLLLARCFLVILASSLLVCPGLA) are cleaved as a signal peptide. Cys25 carries N-palmitoyl cysteine lipidation. The Cardin-Weintraub motif lies at 33 to 39 (KRRHPKK). Ca(2+)-binding residues include Glu90, Glu91, Asp96, Thr126, Glu127, Asp130, and Asp132. Zn(2+)-binding residues include His141, Asp148, and His183. Gly198 carries the Cholesterol glycine ester lipid modification. An N-linked (GlcNAc...) asparagine glycan is attached at Asn279.

The protein belongs to the hedgehog family. In terms of assembly, interacts with HHATL/GUP1 which negatively regulates HHAT-mediated palmitoylation of the SHH N-terminus. Interacts with BOC and CDON. Interacts with HHIP. Interacts with DISP1 via its cholesterol anchor. Interacts with SCUBE2. Interacts with glypican GPC3. As to quaternary structure, multimer. In terms of processing, the C-terminal domain displays an autoproteolysis activity and a cholesterol transferase activity. Both activities result in the cleavage of the full-length protein and covalent attachment of a cholesterol moiety to the C-terminal of the newly generated N-terminal fragment (ShhN). Cholesterylation is required for the sonic hedgehog protein N-product targeting to lipid rafts and multimerization. ShhN is the active species in both local and long-range signaling, whereas the C-product (ShhC) is degraded in the endoplasmic reticulum. Post-translationally, N-palmitoylation by HHAT of ShhN is required for sonic hedgehog protein N-product multimerization and full activity. It is a prerequisite for the membrane-proximal positioning and the subsequent shedding of this N-terminal peptide. The lipidated N- and C-terminal peptides of ShhNp can be cleaved (shedding). The N-terminal palmitoylated peptide is cleaved at the Cardin-Weintraub (CW) motif site. The cleavage reduced the interactions with heparan sulfate. The cleavage is enhanced by SCUBE2. In terms of tissue distribution, expressed in a number of embryonic tissues including the notochord, ventral neural tube, floor plate, lung bud, zone of polarizing activity and posterior distal mesenchyme of limbs. In the adult, expressed in lung and neural retina.

It is found in the endoplasmic reticulum membrane. Its subcellular location is the golgi apparatus membrane. It localises to the cell membrane. It catalyses the reaction glycyl-L-cysteinyl-[protein] + cholesterol + H(+) = [protein]-C-terminal glycyl cholesterol ester + N-terminal L-cysteinyl-[protein]. In terms of biological role, the C-terminal part of the sonic hedgehog protein precursor displays an autoproteolysis and a cholesterol transferase activity. Both activities result in the cleavage of the full-length protein into two parts (ShhN and ShhC) followed by the covalent attachment of a cholesterol moiety to the C-terminal of the newly generated ShhN. Both activities occur in the reticulum endoplasmic. Once cleaved, ShhC is degraded in the endoplasmic reticulum. The dually lipidated sonic hedgehog protein N-product (ShhNp) is a morphogen which is essential for a variety of patterning events during development. Induces ventral cell fate in the neural tube and somites. Involved in the patterning of the anterior-posterior axis of the developing limb bud. Essential for axon guidance. Binds to the patched (PTCH1) receptor, which functions in association with smoothened (SMO), to activate the transcription of target genes. In the absence of SHH, PTCH1 represses the constitutive signaling activity of SMO. The protein is Sonic hedgehog protein of Mus musculus (Mouse).